The chain runs to 374 residues: Zinc finger CCCH domain-containing protein 15 homolog (374 aa).

2 consecutive C3H1-type zinc fingers follow at residues 89–116 (DPKS…HDLA) and 167–197 (YFLE…HCLP).

Belongs to the ZC3H15/TMA46 family.

The sequence is that of Zinc finger CCCH domain-containing protein 15 homolog from Caenorhabditis briggsae.